We begin with the raw amino-acid sequence, 405 residues long: Phosphopentomutase (405 aa).

Positions 10, 297, 302, 338, 339, and 350 each coordinate Mn(2+).

This sequence belongs to the phosphopentomutase family. Mn(2+) is required as a cofactor.

The protein resides in the cytoplasm. It catalyses the reaction 2-deoxy-alpha-D-ribose 1-phosphate = 2-deoxy-D-ribose 5-phosphate. The catalysed reaction is alpha-D-ribose 1-phosphate = D-ribose 5-phosphate. It participates in carbohydrate degradation; 2-deoxy-D-ribose 1-phosphate degradation; D-glyceraldehyde 3-phosphate and acetaldehyde from 2-deoxy-alpha-D-ribose 1-phosphate: step 1/2. Isomerase that catalyzes the conversion of deoxy-ribose 1-phosphate (dRib-1-P) and ribose 1-phosphate (Rib-1-P) to deoxy-ribose 5-phosphate (dRib-5-P) and ribose 5-phosphate (Rib-5-P), respectively. The sequence is that of Phosphopentomutase from Pseudoalteromonas translucida (strain TAC 125).